We begin with the raw amino-acid sequence, 122 residues long: Lectin A (122 aa).

Tyr-38 provides a ligand contact to Ca(2+). An alpha-D-galactoside-binding residues include Glu-44, Gln-57, and Asp-96. Ca(2+) contacts are provided by Asp-96, Thr-100, Asp-103, and Asn-104. Asp-103 is a binding site for an alpha-D-galactoside.

This sequence belongs to the LecA/PllA lectin family. Homotetramer.

In terms of biological role, lectin that specifically binds alpha-galactoside-terminating glycoconjugates. Shows high apparent binding to the alpha-Gal epitope (Gal-alpha-1,3-Gal-beta-1,4-GlcNAc terminating glycans) as well as to Gal-alpha-1,4-GlcNAc and Gal-alpha-1,3-GalNAc. Gal-alpha-1,3-GalNAc may be one natural ligand bound by PllA both in the nematode symbiont and in infected insects. In Photorhabdus laumondii subsp. laumondii (strain DSM 15139 / CIP 105565 / TT01) (Photorhabdus luminescens subsp. laumondii), this protein is Lectin A.